Reading from the N-terminus, the 309-residue chain is Homoserine kinase (309 aa).

95-105 (PHGRGLGSSSA) is an ATP binding site.

The protein belongs to the GHMP kinase family. Homoserine kinase subfamily.

The protein resides in the cytoplasm. It catalyses the reaction L-homoserine + ATP = O-phospho-L-homoserine + ADP + H(+). It participates in amino-acid biosynthesis; L-threonine biosynthesis; L-threonine from L-aspartate: step 4/5. Its function is as follows. Catalyzes the ATP-dependent phosphorylation of L-homoserine to L-homoserine phosphate. The sequence is that of Homoserine kinase from Streptomyces coelicolor (strain ATCC BAA-471 / A3(2) / M145).